Reading from the N-terminus, the 341-residue chain is Acetylpolyamine amidohydrolase (341 aa).

The active-site Proton donor/acceptor is H157. Residues D192, H194, and D281 each contribute to the Zn(2+) site.

Belongs to the histone deacetylase family. Homodimer. The cofactor is Zn(2+).

The enzyme catalyses N-acetylputrescine + H2O = putrescine + acetate. The catalysed reaction is N-acetylcadaverine + H2O = cadaverine + acetate. It functions in the pathway amine and polyamine metabolism. Involved in polyamine metabolism. Catalyzes the deacetylation of various acetylated polyamines such as N-acetylputrescine and N-acetylcadaverine. In Burkholderia pseudomallei (strain 1710b), this protein is Acetylpolyamine amidohydrolase.